The sequence spans 216 residues: uncharacterized protein (216 aa).

The chain crosses the membrane as a helical span at residues 5 to 22 (LGLVFGSVILIYLISLFL).

It localises to the membrane. This is an uncharacterized protein from Aquifex aeolicus (strain VF5).